Consider the following 242-residue polypeptide: Phosphoribosylaminoimidazole-succinocarboxamide synthase (242 aa).

Belongs to the SAICAR synthetase family.

The enzyme catalyses 5-amino-1-(5-phospho-D-ribosyl)imidazole-4-carboxylate + L-aspartate + ATP = (2S)-2-[5-amino-1-(5-phospho-beta-D-ribosyl)imidazole-4-carboxamido]succinate + ADP + phosphate + 2 H(+). It functions in the pathway purine metabolism; IMP biosynthesis via de novo pathway; 5-amino-1-(5-phospho-D-ribosyl)imidazole-4-carboxamide from 5-amino-1-(5-phospho-D-ribosyl)imidazole-4-carboxylate: step 1/2. The polypeptide is Phosphoribosylaminoimidazole-succinocarboxamide synthase (Cyanothece sp. (strain PCC 7425 / ATCC 29141)).